The following is a 623-amino-acid chain: DNA polymerase alpha subunit B (623 aa).

The interval 113–151 (IPKIKDEPSSSVDVSTARNKNNHNNNNNNNPSLPNKSMF) is disordered. Positions 121-130 (SSSVDVSTAR) are enriched in polar residues.

Belongs to the DNA polymerase alpha subunit B family. As to quaternary structure, DNA polymerase alpha:primase is a four subunit enzyme complex, which is assembled throughout the cell cycle, and consists of the two DNA polymerase subunits A and B, and the DNA primase large and small subunits. Subunit B binds to subunit A.

Its subcellular location is the nucleus. In terms of biological role, may play an essential role at the early stage of chromosomal DNA replication by coupling the polymerase alpha/primase complex to the cellular replication machinery. The polypeptide is DNA polymerase alpha subunit B (polA2) (Dictyostelium discoideum (Social amoeba)).